The sequence spans 420 residues: Gamma-glutamyl phosphate reductase (420 aa).

It belongs to the gamma-glutamyl phosphate reductase family.

Its subcellular location is the cytoplasm. It catalyses the reaction L-glutamate 5-semialdehyde + phosphate + NADP(+) = L-glutamyl 5-phosphate + NADPH + H(+). Its pathway is amino-acid biosynthesis; L-proline biosynthesis; L-glutamate 5-semialdehyde from L-glutamate: step 2/2. Catalyzes the NADPH-dependent reduction of L-glutamate 5-phosphate into L-glutamate 5-semialdehyde and phosphate. The product spontaneously undergoes cyclization to form 1-pyrroline-5-carboxylate. This Streptococcus pneumoniae (strain 70585) protein is Gamma-glutamyl phosphate reductase.